The primary structure comprises 420 residues: Tyrosine--tRNA ligase 2 (420 aa).

Position 36 (Tyr36) interacts with L-tyrosine. The 'HIGH' region signature appears at 41–50 (PTADSLHIGH). L-tyrosine is bound by residues Tyr171 and Gln175. Residues 231 to 235 (KFGKT) carry the 'KMSKS' region motif. Residue Lys234 participates in ATP binding. Residues 354–420 (LSLVDLLVTS…GKKKYFLLKY (67 aa)) form the S4 RNA-binding domain.

Belongs to the class-I aminoacyl-tRNA synthetase family. TyrS type 1 subfamily. Homodimer.

The protein localises to the cytoplasm. The enzyme catalyses tRNA(Tyr) + L-tyrosine + ATP = L-tyrosyl-tRNA(Tyr) + AMP + diphosphate + H(+). In terms of biological role, catalyzes the attachment of tyrosine to tRNA(Tyr) in a two-step reaction: tyrosine is first activated by ATP to form Tyr-AMP and then transferred to the acceptor end of tRNA(Tyr). This chain is Tyrosine--tRNA ligase 2, found in Enterococcus faecalis (strain ATCC 700802 / V583).